Reading from the N-terminus, the 373-residue chain is COP9 signalosome complex subunit 5 (373 aa).

The MPN domain maps to 66-201 (CLISRLATTK…IGAFRTLPSK (136 aa)). Positions 147, 149, and 160 each coordinate Zn(2+). Residues 147–160 (HSHPGYGCWLSNID) carry the JAMM motif motif. The tract at residues 289 to 325 (FTHERSNSISSTSSLTTRHTTDVEMDDQESAQSSLDI) is disordered. Residues 295-306 (NSISSTSSLTTR) are compositionally biased toward low complexity.

It belongs to the peptidase M67A family. CSN5 subfamily. Component of the COP9 signalosome (CSN) complex.

Its subcellular location is the cytoplasm. It localises to the nucleus. Functionally, catalytic Component of the COP9 signalosome (CSN) complex that acts as an regulator of the ubiquitin (Ubl) conjugation pathway by mediating the deneddylation of the cullin subunit of SCF-type E3 ubiquitin-protein ligase complexes. The CNS complex is involved in the regulation of the mating pheromone response. The polypeptide is COP9 signalosome complex subunit 5 (RRI1) (Kluyveromyces lactis (strain ATCC 8585 / CBS 2359 / DSM 70799 / NBRC 1267 / NRRL Y-1140 / WM37) (Yeast)).